The chain runs to 230 residues: Dephospho-CoA kinase (230 aa).

Residues 1–21 (MSKYAAAPSPYSHQPQTPEHK) form a disordered region. One can recognise a DPCK domain in the interval 26-225 (VVGLTGGIGS…QDYLKLAQQL (200 aa)). 34–39 (GSGKSA) provides a ligand contact to ATP.

Belongs to the CoaE family.

It is found in the cytoplasm. The enzyme catalyses 3'-dephospho-CoA + ATP = ADP + CoA + H(+). Its pathway is cofactor biosynthesis; coenzyme A biosynthesis; CoA from (R)-pantothenate: step 5/5. Functionally, catalyzes the phosphorylation of the 3'-hydroxyl group of dephosphocoenzyme A to form coenzyme A. This Psychrobacter cryohalolentis (strain ATCC BAA-1226 / DSM 17306 / VKM B-2378 / K5) protein is Dephospho-CoA kinase.